The sequence spans 151 residues: uncharacterized protein (151 aa).

This is an uncharacterized protein from Bacillus subtilis (strain 168).